The following is a 693-amino-acid chain: CREB-regulated transcription coactivator 2 (693 aa).

The span at 1–20 (MATSGANGPGSATASASNPR) shows a compositional bias: polar residues. The segment at 1-30 (MATSGANGPGSATASASNPRKFSEKIALQK) is disordered. The residue at position 2 (A2) is an N-acetylalanine. At R51 the chain carries Asymmetric dimethylarginine; by PRMT6. Residues S70, S86, and S90 each carry the phosphoserine modification. An asymmetric dimethylarginine; by PRMT6 mark is found at R99, R120, and R123. S136 is subject to Phosphoserine. Residues R161 and R168 each carry the asymmetric dimethylarginine; by PRMT6 modification. T169 is modified (phosphothreonine). S171 is subject to Phosphoserine. Residues 174–188 (ALHTSVMNPSPQDTY) are compositionally biased toward polar residues. The interval 174–210 (ALHTSVMNPSPQDTYPSPAAPSVLPSRRGGCLDGETD) is disordered. Residues 209-215 (TDSKVPA) are required for interaction with COP1. K234 is covalently cross-linked (Glycyl lysine isopeptide (Lys-Gly) (interchain with G-Cter in SUMO2)). The Nuclear export signal motif lies at 271-287 (TGGSLPDLTNLHFPPPL). Disordered stretches follow at residues 271–307 (TGGS…GSST), 335–463 (HSPL…SPTL), and 476–548 (KLPT…QSYH). S274 carries the phosphoserine; by MARK2 modification. S306 bears the Phosphoserine mark. A compositionally biased stretch (polar residues) spans 339–351 (SHPSFQSSLSNPN). Low complexity-rich tracts occupy residues 352 to 378 (LQAS…SSLA) and 386 to 424 (SLGH…PGAS). S368, S393, S433, and S456 each carry phosphoserine. Residues 447-463 (SQQQLPKQFSPTMSPTL) are compositionally biased toward polar residues. Residue Y488 is modified to Phosphotyrosine. 2 positions are modified to phosphoserine: S489 and S492. At T501 the chain carries Phosphothreonine. Residues S613 and S624 each carry the phosphoserine modification.

It belongs to the TORC family. Binds, as a tetramer, through its N-terminal region, with the bZIP domain of CREB1. 'Arg-314' in the bZIP domain of CREB1 is essential for this interaction. Interaction, via its C-terminal, with TAF4, enhances recruitment of TAF4 to CREB1. Interacts with SIK2. Interacts with 14-3-3 proteins, YWHAB and YWHAG. Interacts (probably when phosphorylated at Ser-171) with YWHAE. Interacts with calmodulin-dependent catalytic subunit PPP3CA/calcineurin A. Interaction with COP1 mediates nuclear export and degradation of CRTC2. In terms of processing, phosphorylation/dephosphorylation states of Ser-171 are required for regulating transduction of CREB activity. CRTCs/TORCs are inactive when phosphorylated, and active when dephosphorylated at this site. This primary site of phosphorylation, is regulated by cAMP and calcium levels and is dependent on the phosphorylation of SIKs (SIK1 and SIK2) by LKB1. Following adenylyl cyclase activation, dephosphorylated at Ser-171 by PPP3CA/calcineurin A resulting in CRTC2 dissociation from 14-3-3 proteins and PPP3CA. Both insulin and AMPK increase this phosphorylation of CRTC2 while glucagon suppresses it. Phosphorylation at Ser-274 by MARK2 is induced under low glucose conditions and dephosphorylated in response to glucose influx. Phosphorylation at Ser-274 promotes interaction with 14-3-3 proteins and translocation to the cytoplasm. Asymmetric dimethylation of arginine resisues by PRMT6 enhances the association of CRTC2 with CREB on the promoters of gluconeogenic genes.

Its subcellular location is the cytoplasm. It localises to the nucleus. Transcriptional coactivator for CREB1 which activates transcription through both consensus and variant cAMP response element (CRE) sites. Acts as a coactivator, in the SIK/TORC signaling pathway, being active when dephosphorylated and acts independently of CREB1 'Ser-133' phosphorylation. Enhances the interaction of CREB1 with TAF4. Regulates gluconeogenesis as a component of the LKB1/AMPK/TORC2 signaling pathway. Regulates the expression of specific genes such as the steroidogenic gene, StAR. Potent coactivator of PPARGC1A and inducer of mitochondrial biogenesis in muscle cells. The polypeptide is CREB-regulated transcription coactivator 2 (CRTC2) (Bos taurus (Bovine)).